The sequence spans 125 residues: Secreted RxLR effector protein 55 (125 aa).

The signal sequence occupies residues 1–21 (MAASRSSITTLLLLIVAVALG). Positions 35-38 (RQLR) match the RxLR motif. The segment covering 51 to 87 (ESATSSSSSSALDHKSSAPGEATNASETEHSAASTAS) has biased composition (low complexity). Positions 51–96 (ESATSSSSSSALDHKSSAPGEATNASETEHSAASTASEPKHEGPTM) are disordered. An N-linked (GlcNAc...) asparagine glycan is attached at Asn-74. Residues 99-119 (FVGPAAAGVLAILLIGAVIAF) form a helical membrane-spanning segment.

This sequence belongs to the RxLR effector family.

The protein localises to the secreted. The protein resides in the host cell membrane. In terms of biological role, effector that acts as a broad suppressor of cell death to interrupt plant immunity. Inhibits cell death induced by cell death-inducing proteins, including the PAMP elicitor INF1 from P.infestans. The chain is Secreted RxLR effector protein 55 from Plasmopara viticola (Downy mildew of grapevine).